Reading from the N-terminus, the 142-residue chain is Nucleoside diphosphate kinase (142 aa).

ATP is bound by residues Lys-11, Phe-59, Arg-87, Thr-93, Arg-104, and Asn-114. Catalysis depends on His-117, which acts as the Pros-phosphohistidine intermediate.

It belongs to the NDK family. The cofactor is Mg(2+).

It localises to the cytoplasm. The catalysed reaction is a 2'-deoxyribonucleoside 5'-diphosphate + ATP = a 2'-deoxyribonucleoside 5'-triphosphate + ADP. The enzyme catalyses a ribonucleoside 5'-diphosphate + ATP = a ribonucleoside 5'-triphosphate + ADP. In terms of biological role, major role in the synthesis of nucleoside triphosphates other than ATP. The ATP gamma phosphate is transferred to the NDP beta phosphate via a ping-pong mechanism, using a phosphorylated active-site intermediate. The protein is Nucleoside diphosphate kinase of Hyperthermus butylicus (strain DSM 5456 / JCM 9403 / PLM1-5).